We begin with the raw amino-acid sequence, 613 residues long: tRNA (uracil-5-)-methyltransferase homolog A (613 aa).

The segment at 1–46 (MSEPAAEVPEPMEDCGQDASAVPSSAAPLCQKEEAGPGPAAGPGTQ) is disordered. The 74-residue stretch at 63-136 (FKLELQNVPR…CPLSVRLARP (74 aa)) folds into the RRM domain. A coiled-coil region spans residues 170-200 (YTEQLEQKRLECERVLQKLAKEIGNTNRALL). Position 368 is a phosphoserine (Ser368). S-adenosyl-L-methionine is bound by residues Gln401, Glu451, and Asp500. The Nucleophile role is filled by Cys528. The active-site Proton acceptor is the Glu571.

This sequence belongs to the class I-like SAM-binding methyltransferase superfamily. RNA M5U methyltransferase family. As to expression, widely expressed at low level. Expressed at higher level in proliferating cells.

The protein localises to the cytoplasm. Its subcellular location is the cytosol. It carries out the reaction uridine(54) in tRNA + S-adenosyl-L-methionine = 5-methyluridine(54) in tRNA + S-adenosyl-L-homocysteine + H(+). The enzyme catalyses a uridine in mRNA + S-adenosyl-L-methionine = a 5-methyluridine in mRNA + S-adenosyl-L-homocysteine + H(+). In terms of biological role, S-adenosyl-L-methionine-dependent methyltransferase that catalyzes the formation of 5-methyl-uridine in tRNAs and some mRNAs. Mainly catalyzes the methylation of uridine at position 54 (m5U54) in cytosolic tRNAs. Also able to mediate the formation of 5-methyl-uridine in some mRNAs. The protein is tRNA (uracil-5-)-methyltransferase homolog A of Mus musculus (Mouse).